Here is a 449-residue protein sequence, read N- to C-terminus: Chromosomal replication initiator protein DnaA (449 aa).

The interval 1 to 71 (MPSSLWKHCL…LLSHYSSGRI (71 aa)) is domain I, interacts with DnaA modulators. The segment at 71 to 112 (IEKALLEVGSCSLQPQPHIQAVELTSKSARSSSRVVDRIPES) is domain II. The tract at residues 113 to 329 (RLNKNYTFDS…GALRRVIAYS (217 aa)) is domain III, AAA+ region. ATP is bound by residues Gly157, Gly159, Lys160, and Thr161. Residues 330–449 (RFTHRPITME…YHNLLKKLST (120 aa)) form a domain IV, binds dsDNA region.

Belongs to the DnaA family. As to quaternary structure, oligomerizes as a right-handed, spiral filament on DNA at oriC.

It is found in the cytoplasm. Plays an essential role in the initiation and regulation of chromosomal replication. ATP-DnaA binds to the origin of replication (oriC) to initiate formation of the DNA replication initiation complex once per cell cycle. Binds the DnaA box (a 9 base pair repeat at the origin) and separates the double-stranded (ds)DNA. Forms a right-handed helical filament on oriC DNA; dsDNA binds to the exterior of the filament while single-stranded (ss)DNA is stabiized in the filament's interior. The ATP-DnaA-oriC complex binds and stabilizes one strand of the AT-rich DNA unwinding element (DUE), permitting loading of DNA polymerase. After initiation quickly degrades to an ADP-DnaA complex that is not apt for DNA replication. Binds acidic phospholipids. The polypeptide is Chromosomal replication initiator protein DnaA (Nitrosococcus oceani (strain ATCC 19707 / BCRC 17464 / JCM 30415 / NCIMB 11848 / C-107)).